We begin with the raw amino-acid sequence, 660 residues long: Pseudouridylate synthase 7 homolog (660 aa).

A disordered region spans residues 1 to 99 (MEMTSTSLKR…EAGEEEEAES (99 aa)). At serine 7 the chain carries Phosphoserine. A compositionally biased stretch (basic and acidic residues) spans 22–32 (TPHDETKKQKV). The span at 76–99 (QEEEEEEEEEDGLSEAGEEEEAES) shows a compositional bias: acidic residues. Serine 126 is subject to Phosphoserine. Aspartate 293 serves as the catalytic Nucleophile. The region spanning 369–579 (GFINYYGMQR…SGAYRRIIIR (211 aa)) is the TRUD domain.

This sequence belongs to the pseudouridine synthase TruD family. Interacts with SIRT1.

It localises to the nucleus. It catalyses the reaction a uridine in tRNA = a pseudouridine in tRNA. The catalysed reaction is uridine(13) in tRNA = pseudouridine(13) in tRNA. It carries out the reaction a uridine in mRNA = a pseudouridine in mRNA. Its function is as follows. Pseudouridylate synthase that catalyzes pseudouridylation of RNAs. Acts as a regulator of protein synthesis in embryonic stem cells by mediating pseudouridylation of RNA fragments derived from tRNAs (tRFs): pseudouridylated tRFs inhibit translation by targeting the translation initiation complex. Also catalyzes pseudouridylation of mRNAs: mediates pseudouridylation of mRNAs with the consensus sequence 5'-UGUAG-3'. Acts as a regulator of pre-mRNA splicing by mediating pseudouridylation of pre-mRNAs at locations associated with alternatively spliced regions. Pseudouridylation of pre-mRNAs near splice sites directly regulates mRNA splicing and mRNA 3'-end processing. In addition to mRNAs and tRNAs, binds other types of RNAs, such as snRNAs, Y RNAs and vault RNAs, suggesting that it can catalyze pseudouridylation of many RNA types. This chain is Pseudouridylate synthase 7 homolog, found in Mus musculus (Mouse).